The sequence spans 621 residues: UvrABC system protein C (621 aa).

The GIY-YIG domain maps to 20-98; the sequence is TAPGVYRMYA…IKSLTPRYNV (79 aa). In terms of domain architecture, UVR spans 207–242; that stretch reads DLLAEELIQAMQVASEHLEFEQAARLRDLLTSLRSM.

It belongs to the UvrC family. Interacts with UvrB in an incision complex.

The protein localises to the cytoplasm. Functionally, the UvrABC repair system catalyzes the recognition and processing of DNA lesions. UvrC both incises the 5' and 3' sides of the lesion. The N-terminal half is responsible for the 3' incision and the C-terminal half is responsible for the 5' incision. In Xylella fastidiosa (strain Temecula1 / ATCC 700964), this protein is UvrABC system protein C.